Here is a 908-residue protein sequence, read N- to C-terminus: NADH-quinone oxidoreductase subunit G (908 aa).

In terms of domain architecture, 2Fe-2S ferredoxin-type spans 2–83 (ATIHVDGKEY…GTFISIDDEE (82 aa)). Residues Cys-34, Cys-45, Cys-48, and Cys-67 each contribute to the [2Fe-2S] cluster site. Residues 83–122 (EAKQFRESVVEWLMTNHPHDCPVCEEGGNCHLQDMTVMTG) form the 4Fe-4S His(Cys)3-ligated-type domain. 12 residues coordinate [4Fe-4S] cluster: His-99, Cys-103, Cys-106, Cys-112, Cys-151, Cys-154, Cys-157, Cys-201, Cys-228, Cys-231, Cys-235, and Cys-263. The 4Fe-4S Mo/W bis-MGD-type domain occupies 221-277 (MQFAPSICQQCSIGCNISPGERYGELRRIENRYNGTVNHYFLCDRGRFGYGYVNLKD).

The protein belongs to the complex I 75 kDa subunit family. As to quaternary structure, composed of 13 different subunits. Subunits NuoCD, E, F, and G constitute the peripheral sector of the complex. [2Fe-2S] cluster is required as a cofactor. Requires [4Fe-4S] cluster as cofactor.

The catalysed reaction is a quinone + NADH + 5 H(+)(in) = a quinol + NAD(+) + 4 H(+)(out). In terms of biological role, NDH-1 shuttles electrons from NADH, via FMN and iron-sulfur (Fe-S) centers, to quinones in the respiratory chain. The immediate electron acceptor for the enzyme in this species is believed to be ubiquinone. Couples the redox reaction to proton translocation (for every two electrons transferred, four hydrogen ions are translocated across the cytoplasmic membrane), and thus conserves the redox energy in a proton gradient. This chain is NADH-quinone oxidoreductase subunit G (nuoG), found in Escherichia coli O6:H1 (strain CFT073 / ATCC 700928 / UPEC).